The chain runs to 142 residues: Large ribosomal subunit protein uL11 (142 aa).

It belongs to the universal ribosomal protein uL11 family. As to quaternary structure, part of the ribosomal stalk of the 50S ribosomal subunit. Interacts with L10 and the large rRNA to form the base of the stalk. L10 forms an elongated spine to which L12 dimers bind in a sequential fashion forming a multimeric L10(L12)X complex. In terms of processing, one or more lysine residues are methylated.

Functionally, forms part of the ribosomal stalk which helps the ribosome interact with GTP-bound translation factors. The polypeptide is Large ribosomal subunit protein uL11 (Mannheimia succiniciproducens (strain KCTC 0769BP / MBEL55E)).